Reading from the N-terminus, the 78-residue chain is D-alanyl carrier protein (78 aa).

A Carrier domain is found at 1–78 (MEFRDQVLDL…KIVAVLEELR (78 aa)). Ser-36 is subject to O-(pantetheine 4'-phosphoryl)serine.

It belongs to the DltC family. Post-translationally, 4'-phosphopantetheine is transferred from CoA to a specific serine of apo-DCP.

The protein resides in the cytoplasm. The protein operates within cell wall biogenesis; lipoteichoic acid biosynthesis. Its function is as follows. Carrier protein involved in the D-alanylation of lipoteichoic acid (LTA). The loading of thioester-linked D-alanine onto DltC is catalyzed by D-alanine--D-alanyl carrier protein ligase DltA. The DltC-carried D-alanyl group is further transferred to cell membrane phosphatidylglycerol (PG) by forming an ester bond, probably catalyzed by DltD. D-alanylation of LTA plays an important role in modulating the properties of the cell wall in Gram-positive bacteria, influencing the net charge of the cell wall. The polypeptide is D-alanyl carrier protein (Staphylococcus saprophyticus subsp. saprophyticus (strain ATCC 15305 / DSM 20229 / NCIMB 8711 / NCTC 7292 / S-41)).